Here is a 72-residue protein sequence, read N- to C-terminus: uncharacterized protein (72 aa).

It is found in the host cytoplasm. This is an uncharacterized protein from Enterobacteriaceae (Bacteriophage Mu).